An 865-amino-acid chain; its full sequence is Alanine--tRNA ligase (865 aa).

4 residues coordinate Zn(2+): H554, H558, C656, and H660.

This sequence belongs to the class-II aminoacyl-tRNA synthetase family. Requires Zn(2+) as cofactor.

It is found in the cytoplasm. It carries out the reaction tRNA(Ala) + L-alanine + ATP = L-alanyl-tRNA(Ala) + AMP + diphosphate. Functionally, catalyzes the attachment of alanine to tRNA(Ala) in a two-step reaction: alanine is first activated by ATP to form Ala-AMP and then transferred to the acceptor end of tRNA(Ala). Also edits incorrectly charged Ser-tRNA(Ala) and Gly-tRNA(Ala) via its editing domain. The polypeptide is Alanine--tRNA ligase (Idiomarina loihiensis (strain ATCC BAA-735 / DSM 15497 / L2-TR)).